Reading from the N-terminus, the 157-residue chain is uncharacterized protein (157 aa).

Positions 1-11 (MGDLEGQDRPD) are enriched in basic and acidic residues. A disordered region spans residues 1–22 (MGDLEGQDRPDPISTMVGPSGT).

It is found in the mitochondrion. This is an uncharacterized protein from Arabidopsis thaliana (Mouse-ear cress).